The chain runs to 315 residues: Mannose-6-phosphate isomerase ManA (315 aa).

Zn(2+)-binding residues include histidine 97, glutamate 115, and histidine 172. Residue arginine 192 is part of the active site.

Belongs to the mannose-6-phosphate isomerase type 1 family. The cofactor is Zn(2+).

It carries out the reaction D-mannose 6-phosphate = D-fructose 6-phosphate. The sequence is that of Mannose-6-phosphate isomerase ManA (manA) from Bacillus subtilis (strain 168).